Reading from the N-terminus, the 582-residue chain is 5-aminolevulinate synthase, erythroid-specific, mitochondrial (582 aa).

The N-terminal 44 residues, 1 to 44 (MLLQRCPVLIRSPTAILGKMIKTHQFLIGIGRCPILATQGTTCS), are a transit peptide targeting the mitochondrion. Residue Arg-158 participates in succinyl-CoA binding. Pyridoxal 5'-phosphate is bound by residues Cys-253 and Phe-254. Succinyl-CoA contacts are provided by Ser-275 and Lys-294. Pyridoxal 5'-phosphate-binding residues include Ser-327, His-355, and Thr-383. The active site involves Lys-386. Lys-386 is modified (N6-(pyridoxal phosphate)lysine). Residues Thr-415 and Thr-416 each contribute to the pyridoxal 5'-phosphate site. A succinyl-CoA-binding site is contributed by Thr-503.

Belongs to the class-II pyridoxal-phosphate-dependent aminotransferase family. As to quaternary structure, homodimer. Pyridoxal 5'-phosphate is required as a cofactor.

It is found in the mitochondrion inner membrane. It catalyses the reaction succinyl-CoA + glycine + H(+) = 5-aminolevulinate + CO2 + CoA. It participates in porphyrin-containing compound metabolism; protoporphyrin-IX biosynthesis; 5-aminolevulinate from glycine: step 1/1. Catalyzes the pyridoxal 5'-phosphate (PLP)-dependent condensation of succinyl-CoA and glycine to form aminolevulinic acid (ALA), with CoA and CO2 as by-products. Contributes significantly to heme formation during erythropoiesis. This Delphinapterus leucas (Beluga whale) protein is 5-aminolevulinate synthase, erythroid-specific, mitochondrial (ALAS2).